The following is a 231-amino-acid chain: dTTP/UTP pyrophosphatase (231 aa).

The active-site Proton acceptor is Asp-81.

It belongs to the Maf family. YhdE subfamily. A divalent metal cation serves as cofactor.

It localises to the cytoplasm. The enzyme catalyses dTTP + H2O = dTMP + diphosphate + H(+). It catalyses the reaction UTP + H2O = UMP + diphosphate + H(+). In terms of biological role, nucleoside triphosphate pyrophosphatase that hydrolyzes dTTP and UTP. May have a dual role in cell division arrest and in preventing the incorporation of modified nucleotides into cellular nucleic acids. The chain is dTTP/UTP pyrophosphatase from Lawsonia intracellularis (strain PHE/MN1-00).